The primary structure comprises 473 residues: ATP-dependent 6-phosphofructokinase 1 (473 aa).

A Phosphoserine modification is found at Ser-71. ATP-binding positions include Gly-102, 165–166, and 190–193; these read RG and GDGS. Position 191 (Asp-191) interacts with Mg(2+). Substrate contacts are provided by residues 219-221, 264-266, Glu-320, and 376-379; these read TID, MGR, and YMIR. Asp-221 functions as the Proton acceptor in the catalytic mechanism.

It belongs to the phosphofructokinase type A (PFKA) family. PPi-dependent PFK group II subfamily. Atypical ATP-dependent clade 'X' sub-subfamily. As to quaternary structure, homotetramer. Mg(2+) serves as cofactor. As to expression, expressed in roots, leaves, stems and flowers.

Its subcellular location is the cytoplasm. The enzyme catalyses beta-D-fructose 6-phosphate + ATP = beta-D-fructose 1,6-bisphosphate + ADP + H(+). Its pathway is carbohydrate degradation; glycolysis; D-glyceraldehyde 3-phosphate and glycerone phosphate from D-glucose: step 3/4. Allosterically activated by AMP. In terms of biological role, catalyzes the phosphorylation of D-fructose 6-phosphate to fructose 1,6-bisphosphate by ATP, the first committing step of glycolysis. This is ATP-dependent 6-phosphofructokinase 1 from Arabidopsis thaliana (Mouse-ear cress).